A 731-amino-acid polypeptide reads, in one-letter code: MNDQQPFSVTASPTTEKTSAFSLTIRPDNIGVISIDVPGERVNTLKSEFAEQILSVFELARQHATLRGLIFISAKPDSFIAGADITMLNKCSSAEQAENLAKQGQETFDQIAALPFPVVAAIHGACLGGGLELALACDYRVCSLDEKTVLGLPEVQLGLLPGSGGTQRLPRLIGLDSALDLILTGRHLRAGQALRQGLVDEAVPHDILLDTAVEILKKGKRKAVPLGWRSRLLNSPGIRHLLFKMVKRKTRAKTHGNYPATEKIIQVVRRGIEKGREEGYRHEARAFGKLVMTPESAALRHLFFATNALKKTSGAASEAKPIHRVGILGGGLMGGGIASVTATRGQLPVRIKDINEQGINHALKYNWQLLTKRVQSKRMKPTERQRLMTLISGSTDYRGFEHADIVIEAVFEDLALKRQMITEIEDHAAPHTIFASNTSSLPIHQIAEGARRPQLVVGLHYFSPVDKMPLVEVIPHAHTSAETVATTVALARKQGKTAIVVGDSAGFYVNRILAPYINEAAYCLLEGEPIESIDYALVRFGFPVGPLALLDEVGIDVATKIVPVLSEELGDRFTSPPAFDAILKDGRKGRKNGKGFYRYNKTRRFWHSGKEVDSSVYPLLDVTPKAHIDPALISQRAVMMMLNEAARCLDEGVIQCARDGDIGAVFGIGFPPFLGGPFHYMDRLGMETVVKTLLVLQQQYGDRFAPCERLLTMREGQRTFYPPADKDNSIS.

The segment at Thr-15–Pro-204 is enoyl-CoA hydratase. The tract at residues Lys-320 to Ser-729 is 3-hydroxyacyl-CoA dehydrogenase.

The protein in the N-terminal section; belongs to the enoyl-CoA hydratase/isomerase family. It in the central section; belongs to the 3-hydroxyacyl-CoA dehydrogenase family. In terms of assembly, heterotetramer of two alpha chains (FadJ) and two beta chains (FadI).

The protein resides in the cytoplasm. The enzyme catalyses a (3S)-3-hydroxyacyl-CoA = a (2E)-enoyl-CoA + H2O. It catalyses the reaction a 4-saturated-(3S)-3-hydroxyacyl-CoA = a (3E)-enoyl-CoA + H2O. It carries out the reaction a (3S)-3-hydroxyacyl-CoA + NAD(+) = a 3-oxoacyl-CoA + NADH + H(+). The catalysed reaction is (3S)-3-hydroxybutanoyl-CoA = (3R)-3-hydroxybutanoyl-CoA. It participates in lipid metabolism; fatty acid beta-oxidation. In terms of biological role, catalyzes the formation of a hydroxyacyl-CoA by addition of water on enoyl-CoA. Also exhibits 3-hydroxyacyl-CoA epimerase and 3-hydroxyacyl-CoA dehydrogenase activities. The sequence is that of Fatty acid oxidation complex subunit alpha from Pectobacterium atrosepticum (strain SCRI 1043 / ATCC BAA-672) (Erwinia carotovora subsp. atroseptica).